The chain runs to 108 residues: Cytochrome c-555 (108 aa).

A signal peptide spans 1–22 (MSRFVSAALVGAALLVSGNAFA). Residues Cys36, Cys39, His40, and Met82 each contribute to the heme c site.

Binds 1 heme c group covalently per subunit.

Its function is as follows. This basic c-type monoheme cytochrome has been found exclusively in the green photosynthetic bacteria, although its role in bacterial photosynthesis is not established. It has an unusually low redox potential compared with mitochondrial cytochrome c. It is reactive with cytochrome c oxidases but not with reductases. This is Cytochrome c-555 from Chlorobaculum tepidum (strain ATCC 49652 / DSM 12025 / NBRC 103806 / TLS) (Chlorobium tepidum).